Consider the following 1481-residue polypeptide: MIERGKFRSLTLVNWNGFFARTFDLDELVTTLSGGNGAGKSTTMAAFVTALIPDLTLLHFRNTTEAGATSGSRDKGLHGKLRAGVCYSTLDVVNSRHQRVIVGVRLQQVAGRDRKVDIKPFTIQGLPTAIQPTQILTEVVGERQARVLSLQELKESVEAMEGVQFKQFNSITDYHSLMFDLGVIPKRLRSSADRSKFYRLIEASLYGGISSAITRSLRDYLLPENSGVRKAFQDMEAALRENRMTLEAIRVTQSDRDLFKHLISEATSYVAADYMRHANERRIHLDGALVLRRELLASRKQLVTEQYRHVEMSRELAEQSGAESDLETDYQAASDHLSLVQTAMRQQEKIERYQSDLEELTYRLEEQNEVVAEASEQQADNEARAEAAELEVDELKSQLADYQQALDVQQTRAIQYQQALQALERARALCQLPELTADNAEDWLETFQAKEQEATEALLQLEQKLSVADAAHSQFEQAYQLVVSIAGQVSRSEAWQTARELLRDWPSQQHLAERVQPLRMRLSELEQRLRAQQDAERLLQEFCKRQGQAYQPEELEELQRELESTVEELSLSVSDAGERRMEMRQELEQIKLKIQELTARAPVWLAAQDALSQLSEQSGEALEDSRQVTECMQQLLERERETTVERDEVAAAKRAIDAQIERLSQPSGAEDSRMIALAERFGGVLLSEIYDDVTLDDAPYFSALYGPSRHGIVVPDLSLVRDQLAGLEDCPEDLYLIEGDPQSFDDSVFAVEELEKAVVVKIADRQWRYSRYPEVPLFGRAARENRLEALYQERDSLAERYATLSFDVQKTQRLHQAFSRFIGSHLAVAFDSDPEAEIRLLNTRRGEIERALNAHEERNQQQRQQFEQAKEGISALNRLIPLVSLLLDDTLADRVEEITEELTEAQEAARHIQKHGASLTKLEPLLAVLQSDPQQHEQLKENYAQAQNSQRQAKQQAFALVEVVQRRAHFGYTDSAGMLTENSDLNDKLRQRLEQAEAERTRAREQLRQYQAQFTQYNQVLASLKSSYDAKRDMLKELSQELVDIGVQADANAEARARTRRDELHAALSTNRSRRNQLEKQLTFCEAEMDSLQKKLRKLERDYHQIREQVVNAKAGWCAVMRMVKDNGVERRLHRRELAYMDGDELRSMSDKALGALRLAVADNEHLRDVLRMSEDPKRPERKIQFYIAVYQHLRERIRQDIIRTDDPVEAIEQMEIELGRLTEELTAREQKLAISSKSVSNIIRKTIQREQNRIRMLNQGLQAVSFGQVKSVRLNVNVREAHATLLDVLSEQQEQHQDLFNSNRLTFSEALAKLYQRLNPQMDMGQRLPQTIGEELLDYRNYLELEVEVNRGADGWLRAESGALSTGEAIGTGMSILVMVVQSWEEESRRLRGKDISPCRLLFLDEAARLDAKSIATLFELCERLEMQLIIAAPENISPEKGTTYKLVRKVFQNHEHVHVVGLRGFANEIPTLPSIPVEQ.

34–41 (GGNGAGKS) is an ATP binding site. 5 coiled-coil regions span residues 338–480 (SLVQ…QAYQ), 509–604 (QHLA…APVW), 780–805 (RAAR…ATLS), 835–1116 (EAEI…AKAG), and 1210–1265 (EAIE…LQAV). A flexible hinge region spans residues 666–783 (PSGAEDSRMI…EVPLFGRAAR (118 aa)).

It belongs to the SMC family. MukB subfamily. In terms of assembly, homodimerization via its hinge domain. Binds to DNA via its C-terminal region. Interacts, and probably forms a ternary complex, with MukE and MukF via its C-terminal region. The complex formation is stimulated by calcium or magnesium. Interacts with tubulin-related protein FtsZ.

It is found in the cytoplasm. It localises to the nucleoid. Plays a central role in chromosome condensation, segregation and cell cycle progression. Functions as a homodimer, which is essential for chromosome partition. Involved in negative DNA supercoiling in vivo, and by this means organize and compact chromosomes. May achieve or facilitate chromosome segregation by condensation DNA from both sides of a centrally located replisome during cell division. The chain is Chromosome partition protein MukB from Yersinia enterocolitica serotype O:8 / biotype 1B (strain NCTC 13174 / 8081).